We begin with the raw amino-acid sequence, 240 residues long: Small ribosomal subunit protein uS3 (240 aa).

Residues 39–107 (IRDFIKKEAK…ELHLNIVEVR (69 aa)) form the KH type-2 domain. Basic and acidic residues-rich tracts occupy residues 212–221 (PQARDRRATE) and 231–240 (PRRDRDRDAR). Positions 212 to 240 (PQARDRRATEAQDGPSPRGPRRDRDRDAR) are disordered.

Belongs to the universal ribosomal protein uS3 family. As to quaternary structure, part of the 30S ribosomal subunit. Forms a tight complex with proteins S10 and S14.

Binds the lower part of the 30S subunit head. Binds mRNA in the 70S ribosome, positioning it for translation. The polypeptide is Small ribosomal subunit protein uS3 (Paracoccus denitrificans (strain Pd 1222)).